The chain runs to 412 residues: 2-methylacyl-CoA dehydrogenase, mitochondrial (412 aa).

The N-terminal 25 residues, 1-25 (MHKLFAVRSLSSAIVKSFKSLQNQQ), are a transit peptide targeting the mitochondrion. Residues 154 to 163 (LAMSEPNAGS) and 187 to 189 (WCT) each bind FAD. Serine 163 provides a ligand contact to substrate. Substrate is bound by residues 209-210 (SK), tyrosine 264, and 271-274 (DLER). Residue glutamate 273 is the Proton acceptor of the active site. Residues arginine 299, glutamine 310, and 367–371 (QCLGG) contribute to the FAD site. A substrate-binding site is contributed by 394–395 (AG). 396–398 (TSE) provides a ligand contact to FAD.

This sequence belongs to the acyl-CoA dehydrogenase family. As to quaternary structure, homotetramer. The cofactor is FAD. As to expression, expressed in flowers.

Its subcellular location is the mitochondrion. The catalysed reaction is 2-methylbutanoyl-CoA + oxidized [electron-transfer flavoprotein] + H(+) = (2E)-2-methylbut-2-enoyl-CoA + reduced [electron-transfer flavoprotein]. Its function is as follows. Short/branched-chain acyl-CoA dehydrogenase (SBCAD). Uses 2-methylbutanoyl-CoA as substrate. Minor activity with the straight-chain substrates, butanoyl-CoA, valeryl-CoA, hexanoyl-CoA, and octanoyl-CoA but no activity with isovaleryl-CoA. The sequence is that of 2-methylacyl-CoA dehydrogenase, mitochondrial (2MBCD) from Solanum tuberosum (Potato).